A 1256-amino-acid chain; its full sequence is GPI inositol-deacylase (1256 aa).

A compositionally biased stretch (polar residues) spans 37–48 (DVYANSTTNATA). A disordered region spans residues 37–203 (DVYANSTTNA…MEKEEEQKFV (167 aa)). Residues Asn41 and Asn45 are each glycosylated (N-linked (GlcNAc...) asparagine). Low complexity predominate over residues 59–68 (PRPSRPSQSS). A compositionally biased stretch (polar residues) spans 69 to 83 (AAERTSPESPSVRQS). The span at 107–135 (QSPSQQSQNQQQQQQQQQQQQQQQQQQQS) shows a compositional bias: low complexity. Positions 143–156 (SGNFNWKLSHSRNG) are enriched in polar residues. Asn155 carries N-linked (GlcNAc...) asparagine glycosylation. The span at 165–180 (FFSSSFSHSPSTPPLS) shows a compositional bias: low complexity. The span at 190-202 (HSKEMEKEEEQKF) shows a compositional bias: basic and acidic residues. The helical transmembrane segment at 214-234 (AITFVTLLISILGIGFLALVL) threads the bilayer. A glycan (N-linked (GlcNAc...) asparagine) is linked at Asn235. Residue Ser397 is part of the active site. Asn582 carries N-linked (GlcNAc...) asparagine glycosylation. The next 2 membrane-spanning stretches (helical) occupy residues 882-902 (LYMRYRTVFAAFPLLVVTLVL) and 929-949 (SIPLVLAFLTFLSLFIWNSSS). An N-linked (GlcNAc...) asparagine glycan is attached at Asn960. 6 helical membrane passes run 980 to 1000 (PFFWFLVPVIGLICVGICTVF), 1005 to 1025 (LTLVHILSTAVSLLSFRPGWI), 1053 to 1073 (ILLVLVSTLIPYQFAYLVCCL), 1103 to 1123 (SILLLMLWILPINLPILVVWI), 1130 to 1150 (WLTPFSSHHNVLSIMPFIILV), and 1172 to 1192 (VLLFGIALYAAIYGVSYAYML). 3 N-linked (GlcNAc...) asparagine glycosylation sites follow: Asn1212, Asn1239, and Asn1242.

It belongs to the GPI inositol-deacylase family.

Its subcellular location is the endoplasmic reticulum membrane. Its function is as follows. Involved in inositol deacylation of GPI-anchored proteins which plays important roles in the quality control and ER-associated degradation of GPI-anchored proteins. This is GPI inositol-deacylase (bst-1) from Neurospora crassa (strain ATCC 24698 / 74-OR23-1A / CBS 708.71 / DSM 1257 / FGSC 987).